The chain runs to 391 residues: Pectate lyase B (391 aa).

The N-terminal stretch at 1-30 (MKKTVRSLCSTALALTLGFTLLSGPASVQA) is a signal peptide. Residues Asp-181, Asp-203, and Asp-207 each contribute to the Ca(2+) site. Residue Arg-305 is part of the active site.

The protein belongs to the polysaccharide lyase 1 family. Requires Ca(2+) as cofactor.

Its subcellular location is the secreted. It carries out the reaction Eliminative cleavage of (1-&gt;4)-alpha-D-galacturonan to give oligosaccharides with 4-deoxy-alpha-D-galact-4-enuronosyl groups at their non-reducing ends.. The catalysed reaction is Eliminative cleavage of (1-&gt;4)-alpha-D-galacturonan methyl ester to give oligosaccharides with 4-deoxy-6-O-methyl-alpha-D-galact-4-enuronosyl groups at their non-reducing ends.. Its pathway is glycan metabolism; pectin degradation. Catalyzes the depolymerization of both polygalacturonate and pectins of various methyl esterification degree, with an endo mode of action. Shows the highest activity on 20 to 34% methylated pectin but retains 67%, 51%, 25%, and 1% of its maximum activity on polygalacturonate and 8.5%, 55 to 70%, and 90% methylated pectin, respectively. The polypeptide is Pectate lyase B (Paenibacillus amylolyticus).